The sequence spans 146 residues: Protein JTB (146 aa).

Residues 1-30 (MLAGAGRPGLPQGRHLCWLLCAFTLKLCQA) form the signal peptide. Topologically, residues 31 to 105 (EAPVQEEKLS…CRSALMEQRL (75 aa)) are extracellular. A helical membrane pass occupies residues 106 to 126 (FWKFEGAVVCVALIFACLVII). Over 127 to 146 (RQRQLDRKALEKVRKQIESI) the chain is Cytoplasmic.

Belongs to the JTB family. In terms of assembly, interacts with AURKA, AURKB, BIRC5 and INCENP. May be a component of the CPC at least composed of BIRC5/survivin, CDCA8/borealin, INCENP and AURKB/Aurora-B. As to expression, ubiquitous. Expressed in all normal human tissues studied but overexpressed or underexpressed in many of their malignant counterparts.

It localises to the membrane. Its subcellular location is the mitochondrion. The protein localises to the cytoplasm. The protein resides in the cytoskeleton. It is found in the microtubule organizing center. It localises to the centrosome. Its subcellular location is the spindle. Functionally, required for normal cytokinesis during mitosis. Plays a role in the regulation of cell proliferation. May be a component of the chromosomal passenger complex (CPC), a complex that acts as a key regulator of mitosis. The CPC complex has essential functions at the centromere in ensuring correct chromosome alignment and segregation and is required for chromatin-induced microtubule stabilization and spindle assembly. Increases AURKB activity. Inhibits apoptosis induced by TGFB1. Overexpression induces swelling of mitochondria and reduces mitochondrial membrane potential. The sequence is that of Protein JTB (JTB) from Homo sapiens (Human).